We begin with the raw amino-acid sequence, 166 residues long: 16S rRNA aminocarboxypropyltransferase (166 aa).

Residues Thr17, Ile62, Leu84, Tyr99, and Ser103 each coordinate S-adenosyl-L-methionine.

This sequence belongs to the TDD superfamily. TSR3 family.

The protein resides in the cytoplasm. The enzyme catalyses an N(1)-methylpseudouridine in rRNA + S-adenosyl-L-methionine = N(1)-methyl-N(3)-[(3S)-3-amino-3-carboxypropyl]pseudouridine in rRNA + S-methyl-5'-thioadenosine + H(+). In terms of biological role, aminocarboxypropyltransferase that catalyzes the aminocarboxypropyl transfer on pseudouridine corresponding to position 914 in M.jannaschii 16S rRNA. It constitutes the last step in biosynthesis of the hypermodified N1-methyl-N3-(3-amino-3-carboxypropyl) pseudouridine (m1acp3-Psi). The protein is 16S rRNA aminocarboxypropyltransferase of Saccharolobus islandicus (strain Y.N.15.51 / Yellowstone #2) (Sulfolobus islandicus).